The primary structure comprises 159 residues: Putative transmembrane protein ORF159 (159 aa).

2 consecutive transmembrane segments (helical) span residues 20–40 (LLLS…LSLF) and 59–79 (IIAV…GFCC). Residues 106–108 (RGD) carry the Cell attachment site motif.

The protein localises to the host membrane. This is Putative transmembrane protein ORF159 from Acidianus sp. F28 (AFV-2).